We begin with the raw amino-acid sequence, 617 residues long: Urocanate reductase (617 aa).

T70 carries the FMN phosphoryl threonine modification. A124, E143, N151, T152, G156, G157, and D387 together coordinate FAD. Residue R446 is the Proton donor of the active site. 3 residues coordinate FAD: H553, E582, and L598.

This sequence belongs to the FAD-dependent oxidoreductase 2 family. FRD/SDH subfamily. It depends on FAD as a cofactor. FMN is required as a cofactor.

The enzyme catalyses dihydrourocanate + A = urocanate + AH2. Catalyzes the two-electron reduction of urocanate to dihydrourocanate (also named imidazole propionate or deamino-histidine). Dihydrourocanate is present at higher concentrations in subjects with type 2 diabetes, and directly impairs glucose tolerance and insulin signaling at the level of insulin receptor substrate (IRS) through activation of p38 gamma (MAPK12)-p62-mTORC1. Therefore, the UrdA enzyme from the gut bacteria L.fermentum strain NBRC 3956 may contribute to the pathogenesis of type 2 diabetes by producing the microbial metabolite dihydrourocanate. This is Urocanate reductase from Limosilactobacillus fermentum (strain NBRC 3956 / LMG 18251) (Lactobacillus fermentum).